The primary structure comprises 289 residues: tRNA acetyltransferase TAN1 (289 aa).

The span at 1-10 (MGEKRNRNGK) shows a compositional bias: basic and acidic residues. Disordered regions lie at residues 1–31 (MGEK…DPGT) and 64–83 (DIKE…LSIE). Phosphoserine is present on S72. Residues 146–259 (ADPKNMVKRT…KSNIGMCVVD (114 aa)) form the THUMP domain.

The protein localises to the cytoplasm. It is found in the nucleus. Functionally, probable tRNA acetyltransferase required for the formation of the modified nucleoside N(4)-acetylcytidine in serine and leucine tRNAs. Binds RNA. This Saccharomyces cerevisiae (strain ATCC 204508 / S288c) (Baker's yeast) protein is tRNA acetyltransferase TAN1 (TAN1).